Consider the following 566-residue polypeptide: Lactase-like protein (566 aa).

The N-terminal stretch at 1-20 is a signal peptide; it reads MKPVWVIILGWILLVPRVGT. The Extracellular segment spans residues 21–540; sequence AWRGPPEEAS…LLRHMHVASE (520 aa). 2 N-linked (GlcNAc...) asparagine glycosylation sites follow: N170 and N244. Residues 541 to 561 traverse the membrane as a helical segment; it reads IVVPTVCALSILTAALMLTLL. Residues 562–566 are Cytoplasmic-facing; sequence LRRRG.

The protein belongs to the glycosyl hydrolase 1 family. Klotho subfamily. As to quaternary structure, may form dimers. As to expression, strongly expressed in the lens of the eye, where it localizes to the equatorial epithelium and outer layers of newly extending fiber cells (at protein level). May also be expressed in kidney and skin. However, another study suggests that expression is specific to eye and is minimal in other tissues.

The protein localises to the endoplasmic reticulum membrane. Functionally, plays a role in formation of the lens suture in the eye, which is important for normal optical properties of the lens. The chain is Lactase-like protein (Lctl) from Mus musculus (Mouse).